The following is a 188-amino-acid chain: Capsid protein (188 aa).

A compositionally biased stretch (basic residues) spans 150–181 (RRRGGARASRSPRRRTPSPRRRRSQSPRRRRS). Residues 150–188 (RRRGGARASRSPRRRTPSPRRRRSQSPRRRRSQSPSANC) form a disordered region. Phosphoserine; by host occurs at positions 160, 167, and 175. A 1; half-length repeat occupies 160 to 166 (SPRRRTP). Residues 160-182 (SPRRRTPSPRRRRSQSPRRRRSQ) are 3 X 8 AA repeats of S-P-R-R-R-[PR]-S-Q. Residues 163-180 (RRTPSPRRRRSQSPRRRR) carry the Bipartite nuclear localization signal motif. 2 tandem repeats follow at residues 167 to 174 (SPRRRRSQ) and 175 to 182 (SPRRRRSQ). An RNA binding region spans residues 182-188 (QSPSANC).

This sequence belongs to the orthohepadnavirus core antigen family. Homodimerizes, then multimerizes. Interacts with cytosol exposed regions of viral L glycoprotein present in the reticulum-to-Golgi compartment. Interacts with human FLNB. Phosphorylated form interacts with host importin alpha; this interaction depends on the exposure of the NLS, which itself depends upon genome maturation and/or phosphorylation of the capsid protein. Interacts with host NUP153. Phosphorylated by host SRPK1, SRPK2, and maybe protein kinase C or GAPDH. Phosphorylation is critical for pregenomic RNA packaging. Protein kinase C phosphorylation is stimulated by HBx protein and may play a role in transport of the viral genome to the nucleus at the late step during the viral replication cycle.

It is found in the virion. Its subcellular location is the host cytoplasm. Its function is as follows. Self assembles to form an icosahedral capsid. Most capsids appear to be large particles with an icosahedral symmetry of T=4 and consist of 240 copies of capsid protein, though a fraction forms smaller T=3 particles consisting of 180 capsid proteins. Entering capsids are transported along microtubules to the nucleus. Phosphorylation of the capsid is thought to induce exposure of nuclear localization signal in the C-terminal portion of the capsid protein that allows binding to the nuclear pore complex via the importin (karyopherin-) alpha and beta. Capsids are imported in intact form through the nuclear pore into the nuclear basket, where it probably binds NUP153. Only capsids that contain the mature viral genome can release the viral DNA and capsid protein into the nucleoplasm. Immature capsids get stuck in the basket. Capsids encapsulate the pre-genomic RNA and the P protein. Pre-genomic RNA is reverse-transcribed into DNA while the capsid is still in the cytoplasm. The capsid can then either be directed to the nucleus, providing more genomes for transcription, or bud through the endoplasmic reticulum to provide new virions. This Marmota monax (Woodchuck) protein is Capsid protein.